The sequence spans 269 residues: uncharacterized protein (269 aa).

The next 6 membrane-spanning stretches (helical) occupy residues 21 to 43 (LNVW…ILFT), 48 to 70 (LFLI…FSLI), 121 to 143 (YLIL…VFTF), 147 to 166 (FIIA…FWII), 205 to 227 (SLEV…LFQF), and 242 to 264 (FVAF…YLLW).

The protein resides in the cell membrane. This is an uncharacterized protein from Aquifex aeolicus (strain VF5).